Consider the following 434-residue polypeptide: Bifunctional protein GlmU (434 aa).

The tract at residues methionine 1–lysine 226 is pyrophosphorylase. UDP-N-acetyl-alpha-D-glucosamine contacts are provided by residues leucine 11–glycine 14, lysine 25, glutamine 77, and glycine 84–threonine 85. Aspartate 105 contacts Mg(2+). UDP-N-acetyl-alpha-D-glucosamine contacts are provided by glycine 138, glutamate 152, asparagine 167, and asparagine 224. Position 224 (asparagine 224) interacts with Mg(2+). Residues lysine 227–serine 247 form a linker region. An N-acetyltransferase region spans residues glycine 248–lysine 434. 2 residues coordinate UDP-N-acetyl-alpha-D-glucosamine: arginine 311 and lysine 328. Histidine 339 acts as the Proton acceptor in catalysis. Tyrosine 342 and asparagine 353 together coordinate UDP-N-acetyl-alpha-D-glucosamine. Acetyl-CoA is bound by residues alanine 356, asparagine 362 to tyrosine 363, serine 381, and alanine 399.

This sequence in the N-terminal section; belongs to the N-acetylglucosamine-1-phosphate uridyltransferase family. In the C-terminal section; belongs to the transferase hexapeptide repeat family. As to quaternary structure, homotrimer. The cofactor is Mg(2+).

Its subcellular location is the cytoplasm. It carries out the reaction alpha-D-glucosamine 1-phosphate + acetyl-CoA = N-acetyl-alpha-D-glucosamine 1-phosphate + CoA + H(+). The enzyme catalyses N-acetyl-alpha-D-glucosamine 1-phosphate + UTP + H(+) = UDP-N-acetyl-alpha-D-glucosamine + diphosphate. Its pathway is nucleotide-sugar biosynthesis; UDP-N-acetyl-alpha-D-glucosamine biosynthesis; N-acetyl-alpha-D-glucosamine 1-phosphate from alpha-D-glucosamine 6-phosphate (route II): step 2/2. It participates in nucleotide-sugar biosynthesis; UDP-N-acetyl-alpha-D-glucosamine biosynthesis; UDP-N-acetyl-alpha-D-glucosamine from N-acetyl-alpha-D-glucosamine 1-phosphate: step 1/1. The protein operates within bacterial outer membrane biogenesis; LPS lipid A biosynthesis. Catalyzes the last two sequential reactions in the de novo biosynthetic pathway for UDP-N-acetylglucosamine (UDP-GlcNAc). The C-terminal domain catalyzes the transfer of acetyl group from acetyl coenzyme A to glucosamine-1-phosphate (GlcN-1-P) to produce N-acetylglucosamine-1-phosphate (GlcNAc-1-P), which is converted into UDP-GlcNAc by the transfer of uridine 5-monophosphate (from uridine 5-triphosphate), a reaction catalyzed by the N-terminal domain. In Sulfurimonas denitrificans (strain ATCC 33889 / DSM 1251) (Thiomicrospira denitrificans (strain ATCC 33889 / DSM 1251)), this protein is Bifunctional protein GlmU.